Here is a 121-residue protein sequence, read N- to C-terminus: Acidic phospholipase A2 SpII RP4 (121 aa).

7 cysteine pairs are disulfide-bonded: Cys25-Cys114, Cys27-Cys43, Cys42-Cys94, Cys48-Cys121, Cys49-Cys87, Cys56-Cys80, and Cys74-Cys85. Residues Tyr26, Gly28, and Gly30 each coordinate Ca(2+). His46 is a catalytic residue. Asp47 provides a ligand contact to Ca(2+). The active site involves Asp88.

Requires Ca(2+) as cofactor. In terms of tissue distribution, expressed by the venom gland.

The protein resides in the secreted. It carries out the reaction a 1,2-diacyl-sn-glycero-3-phosphocholine + H2O = a 1-acyl-sn-glycero-3-phosphocholine + a fatty acid + H(+). Its function is as follows. Snake venom phospholipase A2 (PLA2) which exhibits indirect hemolysis, induces mild edema inflammation in the foot pads of mice and slightly delays anticoagulant activities. In mice, not lethal, even at the highest dose, and exhibits low to moderate myotoxicity on muscular fibers. PLA2 catalyzes the calcium-dependent hydrolysis of the 2-acyl groups in 3-sn-phosphoglycerides. In Bothrops alternatus (Urutu), this protein is Acidic phospholipase A2 SpII RP4.